The primary structure comprises 361 residues: Mitogen-activated protein kinase 1 (361 aa).

The region spanning 28–316 is the Protein kinase domain; the sequence is YINLAYIGEG…VEAALAHPYL (289 aa). Residues 34-42 and lysine 57 each bind ATP; that span reads IGEGAYGMV. The active-site Proton acceptor is the aspartate 152. Residue threonine 188 is modified to Phosphothreonine. The TXY motif lies at 188–190; sequence TEY. Tyrosine 190 bears the Phosphotyrosine mark.

It belongs to the protein kinase superfamily. CMGC Ser/Thr protein kinase family. MAP kinase subfamily. Interacts with CDK2AP2. Mg(2+) serves as cofactor. In terms of processing, dually phosphorylated on Thr-188 and Tyr-190, which activates the enzyme. As to expression, expressed in the central nervous system, kidney, liver, intestine and the hematopoietic system. Also found in heart, muscle, pancreas and lung.

Its subcellular location is the cytoplasm. The protein resides in the cytoskeleton. The protein localises to the microtubule organizing center. It is found in the centrosome. It localises to the spindle. The enzyme catalyses L-seryl-[protein] + ATP = O-phospho-L-seryl-[protein] + ADP + H(+). It catalyses the reaction L-threonyl-[protein] + ATP = O-phospho-L-threonyl-[protein] + ADP + H(+). With respect to regulation, activated by tyrosine phosphorylation during the M phase of the meiotic cell cycle. Dephosphorylated and inactivated by DUSP1. Serine/threonine kinase which acts as an essential component of the MAP kinase signal transduction pathway. Plays an important role in the MAPK/ERK cascade. Depending on the cellular context, this cascade mediates diverse biological functions such as cell growth, adhesion, survival and differentiation through the regulation of transcription, translation, cytoskeletal rearrangements. The MAPK/ERK cascade also plays a role in initiation and regulation of meiosis, mitosis, and postmitotic functions in differentiated cells by phosphorylating a number of transcription factors. Many of the substrates are localized in the nucleus, and seem to participate in the regulation of transcription upon stimulation. However, other substrates are found in the cytosol as well as in other cellular organelles, and those are responsible for processes such as translation, mitosis and apoptosis. Moreover, the MAPK/ERK cascade is also involved in the regulation of the endosomal dynamics, including lysosome processing and endosome cycling through the perinuclear recycling compartment (PNRC); as well as in the fragmentation of the Golgi apparatus during mitosis. Phosphorylates microtubule-associated protein 2 (MAP2), myelin basic protein (MBP) and Elk-1. Phosphorylates dual specificity protein phosphatase 1 (DUSP1) during meiosis, increasing its stability. Activated by M phase promoting factor (MPF). Plays a role in the spindle assembly checkpoint. The chain is Mitogen-activated protein kinase 1 (mapk1) from Xenopus laevis (African clawed frog).